The chain runs to 551 residues: Membrane protein insertase YidC (551 aa).

A helical transmembrane segment spans residues 6–26 (YFLWGALFISGYLLFLQWSQD). The segment covering 34-50 (SVAQSTQSQSETNSQMS) has biased composition (low complexity). The segment at 34–68 (SVAQSTQSQSETNSQMSDDLPMATQSTTEANAEIP) is disordered. Over residues 56–68 (ATQSTTEANAEIP) the composition is skewed to polar residues. The next 5 membrane-spanning stretches (helical) occupy residues 340–360 (TVDYGWLWWLAKPLFWLLTLI), 363–383 (FVINWGIAIILIVVCVKAIFF), 433–453 (LGGCLPILVQMPVFLSLYWVL), 464–484 (FFLWIHDLSVMDPYFILPILM), and 509–529 (IMPVAFSIFFLWFPAGLVLYW).

Belongs to the OXA1/ALB3/YidC family. Type 1 subfamily. In terms of assembly, interacts with the Sec translocase complex via SecD. Specifically interacts with transmembrane segments of nascent integral membrane proteins during membrane integration.

The protein localises to the cell inner membrane. In terms of biological role, required for the insertion and/or proper folding and/or complex formation of integral membrane proteins into the membrane. Involved in integration of membrane proteins that insert both dependently and independently of the Sec translocase complex, as well as at least some lipoproteins. Aids folding of multispanning membrane proteins. In Marinomonas sp. (strain MWYL1), this protein is Membrane protein insertase YidC.